A 634-amino-acid polypeptide reads, in one-letter code: MKCAHFIDGPHCVKACPAGVLGENDTLVWKYADANAVCQLCHPNCTRGCKGPGLEGCPNGSKTPSIAAGVVGGLLCLVVVGLGIGLYLRRRHIVRKRTLRRLLQERELVEPLTPSGEAPNQAHLRILKETEFKKVKVLGSGAFGTVYKGLWIPEGEKVKIPVAIKELREATSPKANKEILDEAYVMASVDNPHVCRLLGICLTSTVQLITQLMPYGCLLDYIREHKDNIGSQYLLNWCVQIAKGMNYLEERRLVHRDLAARNVLVKTPQHVKITDFGLAKLLGADEKEYHAEGGKVPIKWMALESILHRIYTHQSDVWSYGVTVWELMTFGSKPYDGIPASEISSVLEKGERLPQPPICTIDVYMIMVKCWMIDADSRPKFRELIAEFSKMARDPPRYLVIQGDERMHLPSPTDSKFYRTLMEEEDMEDIVDADEYLVPHQGFFNSPSTSRTPLLSSLSATSNNSATNCIDRNGQGHPVREDSFVQRYSSDPTGNFLEESIDDGFLPAPEYVNQLMPKKPSTAMVQNQIYNNISLTAISKLPMDSRYQNSHSTAVDNPEYLNTNQSPLAKTVFESSPYWIQSGNHQINLDNPDYQQDFLPNETKPNGLLKVPAAENPEYLRVAAPKSEYIEASA.

The Protein kinase domain maps to 132–399; it reads FKKVKVLGSG…KMARDPPRYL (268 aa). ATP contacts are provided by residues 138–146 and Lys-165; that span reads LGSGAFGTV. Asp-257 functions as the Proton acceptor in the catalytic mechanism.

Belongs to the protein kinase superfamily. Tyr protein kinase family. EGF receptor subfamily.

The enzyme catalyses L-tyrosyl-[protein] + ATP = O-phospho-L-tyrosyl-[protein] + ADP + H(+). The sequence is that of Tyrosine-protein kinase transforming protein erbB (V-ERBB) from Avian leukosis virus (ALV).